We begin with the raw amino-acid sequence, 1063 residues long: MASTTPITMEDLQKALEAQSRALRAELAAGASQLRRPRPPRQRDSSTSGDDSGRDSGGPRRRRGNRGRGQRKDWSKAPPPPEERQESRSQTPAPKPPRAPPQPPQPPRMQTGRGGTAPRPELGPPTNPFQAAVARGLRPPLHDPDTEAPTEACVTSWLWSEGEGAVFYRVDLHFTNLGTPPLDEDGRWDPALMYNPCGPEPPAHVVRAYNQPAGDVRGIWGKGERTYAEQDFRVGGTRWHRLLRMPVRGLDGDSAPLPPHTTERIETRSARHPWRIRFGAPQVFLAGLLLAAVAVGTARAGLQPRTDIAAPPAPPQAPRAHGKHYGHHHHQLPFLGHDGHHGGTLRVGQHHRNASDVLPGHWLQGSWGCYNLSDWHQGTHICHTKHMDFWCVEHDRPPPVTPTPLTTAANSTTAATPATTPAPCHAGLNDSCGGFLSGCGPMRLRHGADTRCGRLICGLSTTAQYPPTRFGCTMRWGLPPWELVVLTARPEDGWTCRGVPAHPGTRCPELVSPMGHATCSPASALWLATANALSLDHALAAVVLLVPWVLIFMLCRRACRRRGAAAALTAVVLQGYNPPAYGEEAFTYLCTAPGCATQTPVPVRLAGVRFESKIVDGGCFAPWDLEATGACICEIPTDVSCEGLGAWVPAAPCARIWNGTQRACTLWAVNAYSSGGYAQLASYFNPGGSYYKQYHPTACDVEPAFGHSDAACWGFPTDTVMSVFALASYVQHPDKTVRVKFHTETRTVWQLSVAGVSCNVTTEHPFCNTPHGQLEVQVPPDPGDLVEYIMNYTGNQQSRWGLGSPNCHGPDWASPVCQRHSPDCSRLVGATPERPRLRLVDADDPLLRTAPGPGEVWVTPVIGSQARKCGLHIRAGPYGHATVEMPEWIHAHTTSDPWHPPGPLGLKFKTVRPVALPRALAPPRNVRVTGCYQCGTPALVEGLAPGGGNCHLTVNGEDVGAFPPGKFVTAALLNTPPPYQVSCGGESDRASARVIDPAAQSFTGVVYGTHTTAVSETRQTWAEWAAAHWWQLTLGAICALLLAGLLACCAKCLYYLRGAIAPR.

Residues Leu23–Ala131 form a disordered region. Residues Gly30–Gly69 form a human C1QBP/SF2P32-binding region. Ser46 is subject to Phosphoserine; by host. The segment covering Pro59–Gly69 has biased composition (basic residues). Basic and acidic residues predominate over residues Gln70 to Ser87. The span at Ala93–Pro107 shows a compositional bias: pro residues. Cys153 and Cys197 are joined by a disulfide. The tract at residues Gly279–Ala300 is functions as E2 signal peptide. The Extracellular portion of the chain corresponds to Gly301–Ser534. Positions Arg305–His327 are disordered. Asn353, Asn371, Asn410, and Asn429 each carry an N-linked (GlcNAc...) asparagine; by host glycan. The chain crosses the membrane as a helical span at residues Leu535–Cys555. At Arg556–Gly582 the chain is on the cytoplasmic side. Positions Gly563–Gly582 are functions as E1 signal peptide. Residues Glu583–His1028 are Extracellular-facing. Disulfide bonds link Cys590-Cys595, Cys619-Cys824, Cys641-Cys653, Cys699-Cys712, Cys758-Cys767, Cys807-Cys817, Cys931-Cys934, and Cys950-Cys983. N-linked (GlcNAc...) asparagine; by host glycosylation is present at Asn658. Ca(2+) contacts are provided by Asn670 and Ala671. Ca(2+) contacts are provided by Asp718 and Thr719. 2 N-linked (GlcNAc...) asparagine; by host glycosylation sites follow: Asn759 and Asn791. Thr1011 and Thr1012 each carry an O-linked (GalNAc...) threonine; by host glycan. The helical transmembrane segment at Trp1029–Cys1049 threads the bilayer. Residues Ala1050–Arg1063 lie on the Extracellular side of the membrane.

As to quaternary structure, homodimer; further assembles into homooligomer. Interacts with human C1QBP. Interacts (via N-terminus) with protease/methyltransferase p150. Heterodimer with spike glycoprotein E2. In terms of assembly, heterodimer with spike glycoprotein E1. Structural polyprotein: Specific enzymatic cleavages in vivo yield mature proteins. Two signal peptidase-mediated cleavages within the polyprotein produce the structural proteins capsid, E2, and E1. The E2 signal peptide remains attached to the C-terminus of the capsid protein after cleavage by the signal peptidase. Another signal peptide at E2 C-terminus directs E1 to the ER, with a similar mechanism. In terms of processing, contains three N-linked oligosaccharides. Post-translationally, capsid is phosphorylated on Ser-46 by host. This phosphorylation negatively regulates capsid protein RNA-binding activity. Dephosphorylated by human PP1A.

Its subcellular location is the virion. It is found in the host cytoplasm. It localises to the host mitochondrion. The protein resides in the virion membrane. The protein localises to the host Golgi apparatus membrane. Functionally, capsid protein interacts with genomic RNA and assembles into icosahedric core particles 65-70 nm in diameter. The resulting nucleocapsid eventually associates with the cytoplasmic domain of E2 at the cell membrane, leading to budding and formation of mature virions from host Golgi membranes. Phosphorylation negatively regulates RNA-binding activity, possibly delaying virion assembly during the viral replication phase. Capsid protein dimerizes and becomes disulfide-linked in the virion. Modulates genomic RNA replication. Modulates subgenomic RNA synthesis by interacting with human C1QBP/SF2P32. Induces both perinuclear clustering of mitochondria and the formation of electron-dense intermitochondrial plaques, both hallmarks of rubella virus infected cells. Induces apoptosis when expressed in transfected cells. Responsible for viral attachment to target host cell, by binding to the cell receptor. Its transport to the plasma membrane depends on interaction with E1 protein. The surface glycoproteins display an irregular helical organization and a pseudo-tetrameric inner nucleocapsid arrangement. Its function is as follows. Class II viral fusion protein. Fusion activity is inactive as long as E1 is bound to E2 in mature virion. After virus attachment to target cell and clathrin-mediated endocytosis, acidification of the endosome would induce dissociation of E1/E2 heterodimer and concomitant trimerization of the E1 subunits. This E1 homotrimer is fusion active, and promotes release of viral nucleocapsid in cytoplasm after endosome and viral membrane fusion. The cytoplasmic tail of spike glycoprotein E1 modulates virus release. The surface glycoproteins display an irregular helical organization and a pseudo-tetrameric inner nucleocapsid arrangement. The protein is Structural polyprotein of Rubella virus (strain BRD1) (RUBV).